The sequence spans 619 residues: Lysophospholipid acyltransferase (619 aa).

Residues 1 to 19 lie on the Lumenal side of the membrane; the sequence is MYNPVDAVLTKIITNYGID. The chain crosses the membrane as a helical span at residues 20–39; the sequence is SFTLRYAICLLGSFPLNAIL. The Cytoplasmic segment spans residues 40-51; the sequence is KRIPEKRIGLKC. A helical transmembrane segment spans residues 52–72; the sequence is CFIISMSMFYLFGVLNLVSGF. Residues 73-92 are Lumenal-facing; it reads RTLFISTMFTYLISRFYRSK. The chain crosses the membrane as a helical span at residues 93–113; it reads FMPHLNFMFVMGHLAINHIHA. The Cytoplasmic portion of the chain corresponds to 114-231; it reads QFLNEQTQTT…GERRQIPKNG (118 aa). Asp-146 serves as the catalytic Nucleophile. Residues 232 to 252 traverse the membrane as a helical segment; that stretch reads KLALWKVVQGLAWMILSTLGM. Residues 253-274 are Lumenal-facing; it reads KHFPVKYVLDKDGFPTRSFIFR. Residues 275 to 295 traverse the membrane as a helical segment; it reads IHYLFLLGFIHRFKYYAAWTI. The Cytoplasmic portion of the chain corresponds to 296–429; sequence SEGSCILCGL…TPLPSKKIYD (134 aa). Catalysis depends on Glu-297, which acts as the Nucleophile. Residue His-382 is part of the active site. Residues 430–450 traverse the membrane as a helical segment; the sequence is LVGIYAIKLAFGYMVQPFIIL. Residues 451–456 are Lumenal-facing; it reads DLKPSL. Residues 457 to 477 traverse the membrane as a helical segment; that stretch reads MVWGSVYFYVHIIVAFSFFLF. Residues 478–619 lie on the Cytoplasmic side of the membrane; that stretch reads RGPYAKQVTE…SPKPISKKEE (142 aa). Ser-513 is subject to Phosphoserine. The stretch at 545–593 forms a coiled coil; it reads ELEKWDNAKEDWEDFCKDYKEWRNKNGLEIEEENLSKAFERFKQEFSNA. The interval 592–619 is disordered; it reads NAASGSGERVRKMSFSGYSPKPISKKEE. Ser-605, Ser-610, and Ser-615 each carry phosphoserine.

The protein belongs to the membrane-bound acyltransferase family.

It localises to the endoplasmic reticulum membrane. It carries out the reaction a 1-acyl-sn-glycero-3-phosphate + an acyl-CoA = a 1,2-diacyl-sn-glycero-3-phosphate + CoA. It catalyses the reaction a 1-acyl-sn-glycero-3-phosphocholine + an acyl-CoA = a 1,2-diacyl-sn-glycero-3-phosphocholine + CoA. The catalysed reaction is 1-acyl-sn-glycero-3-phospho-(1'-sn-glycerol) + an acyl-CoA = a 1,2-diacyl-sn-glycero-3-phospho-(1'-sn-glycerol) + CoA. The enzyme catalyses a 1-acyl-sn-glycero-3-phospho-(1D-myo-inositol) + an acyl-CoA = a 1,2-diacyl-sn-glycero-3-phospho-(1D-myo-inositol) + CoA. It carries out the reaction a 1-acyl-sn-glycero-3-phospho-L-serine + an acyl-CoA = a 1,2-diacyl-sn-glycero-3-phospho-L-serine + CoA. It catalyses the reaction a 1-acyl-sn-glycero-3-phosphoethanolamine + an acyl-CoA = a 1,2-diacyl-sn-glycero-3-phosphoethanolamine + CoA. The catalysed reaction is 1-(9Z-octadecenoyl)-sn-glycero-3-phosphoethanolamine + (9Z)-octadecenoyl-CoA = 1,2-di-(9Z-octadecenoyl)-sn-glycero-3-phosphoethanolamine + CoA. The enzyme catalyses 1-(9Z-octadecenoyl)-sn-glycero-3-phosphoethanolamine + (9Z)-hexadecenoyl-CoA = 1-(9Z)-octadecenoyl-2-(9Z)-hexadecenoyl-sn-glycero-3-phosphoethanolamine + CoA. It carries out the reaction 1-(9Z-octadecenoyl)-sn-glycero-3-phosphoethanolamine + hexadecanoyl-CoA = 1-(9Z-octadecenoyl)-2-hexadecanoyl-sn-glycero-3-phosphoethanolamine + CoA. It catalyses the reaction 1-(9Z-octadecenoyl)-sn-glycero-3-phosphoethanolamine + tetradecanoyl-CoA = 1-(9Z)-octadecenoyl-2-tetradecanoyl-sn-glycero-3-phosphoethanolamine + CoA. The catalysed reaction is 1-(9Z-octadecenoyl)-sn-glycero-3-phosphate + (9Z)-octadecenoyl-CoA = 1,2-di-(9Z-octadecenoyl)-sn-glycero-3-phosphate + CoA. The enzyme catalyses (9Z)-hexadecenoyl-CoA + 1-hexadecanoyl-sn-glycero-3-phosphocholine = 1-hexadecanoyl-2-(9Z-hexadecenoyl)-sn-glycero-3-phosphocholine + CoA. It carries out the reaction 1-hexadecanoyl-sn-glycero-3-phosphocholine + (9Z)-octadecenoyl-CoA = 1-hexadecanoyl-2-(9Z-octadecenoyl)-sn-glycero-3-phosphocholine + CoA. It catalyses the reaction 1-tetradecanoyl-sn-glycero-3-phosphoethanolamine + (9Z)-octadecenoyl-CoA = 1-tetradecanoyl-2-(9Z-octadecenoyl)-sn-glycero-3-phosphoethanolamine + CoA. The catalysed reaction is 1-(9Z-octadecenoyl)-sn-glycero-3-phospho-L-serine + (9Z)-octadecenoyl-CoA = 1,2-di-(9Z)-octadecenoyl-sn-glycero-3-phospho-L-serine + CoA. The enzyme catalyses a 1-acyl-sn-glycero-3-phospho-(1D-myo-inositol) + (9Z)-octadecenoyl-CoA = a 1-acyl-2-(9Z-octadecenoyl)-sn-glycero-3-phospho-(1D-myo-inositol) + CoA. The protein operates within lipid metabolism; phospholipid metabolism. Broad specificity membrane-bound O-acyltransferase that mediates the incorporation of unsaturated acyl chains into the sn-2 position of various lysophospholipids. Preferentially acylates lysophosphocholine (LPC), but also lysophosphoethanolamine (LPE), lysophosphatidylglycerol (LPG), lysophosphatidic acid (LPA), lysophosphoethanolamine (LPE), lysophosphoinositol (LPI), and lysophosphoserine (LPS). Prefers an acyl residue to an alkyl residue at the sn-1 position of lysophospholipid acceptors. Accepts acyl chains in acyl-CoA from C-2 to C-20, and shows strong preference for unsaturated acyl-CoAs with 16-20 carbons. Together with SLC1, plays a central role in phosphatidic acid (PA) biosynthesis. PA is the intermediate, from which all glycerophospholipids are synthesized. Can also introduce an acyl chain at the sn-1 position of the lysophosphatidylcholine analog 1-hydroxy-2-hexadecyl-sn-glycero-3-phosphocholine (HHPC). The chain is Lysophospholipid acyltransferase from Saccharomyces cerevisiae (strain ATCC 204508 / S288c) (Baker's yeast).